Reading from the N-terminus, the 1030-residue chain is Putative pentatricopeptide repeat-containing protein At5g06400, mitochondrial (1030 aa).

Residues methionine 1 to arginine 77 constitute a mitochondrion transit peptide. PPR repeat units follow at residues arginine 188–lysine 222, aspartate 223–leucine 257, aspartate 258–phenylalanine 292, glycine 293–isoleucine 323, glutamate 328–leucine 362, aspartate 363–arginine 393, aspartate 397–proline 431, arginine 432–proline 466, aspartate 467–proline 501, threonine 502–isoleucine 536, asparagine 677–isoleucine 711, threonine 712–proline 746, serine 747–proline 783, aspartate 784–isoleucine 814, valine 818–leucine 852, aspartate 853–proline 887, glycine 888–proline 922, serine 923–proline 957, and aspartate 958–proline 992.

Belongs to the PPR family. P subfamily.

It localises to the mitochondrion. This is Putative pentatricopeptide repeat-containing protein At5g06400, mitochondrial from Arabidopsis thaliana (Mouse-ear cress).